The primary structure comprises 185 residues: Ribosome-recycling factor (185 aa).

It belongs to the RRF family.

It is found in the cytoplasm. Functionally, responsible for the release of ribosomes from messenger RNA at the termination of protein biosynthesis. May increase the efficiency of translation by recycling ribosomes from one round of translation to another. This chain is Ribosome-recycling factor, found in Nitrosospira multiformis (strain ATCC 25196 / NCIMB 11849 / C 71).